The following is a 320-amino-acid chain: o-succinylbenzoate synthase (320 aa).

Catalysis depends on K133, which acts as the Proton donor. Mg(2+) is bound by residues D161, E190, and D213. Catalysis depends on K235, which acts as the Proton acceptor.

The protein belongs to the mandelate racemase/muconate lactonizing enzyme family. MenC type 1 subfamily. The cofactor is a divalent metal cation.

It carries out the reaction (1R,6R)-6-hydroxy-2-succinyl-cyclohexa-2,4-diene-1-carboxylate = 2-succinylbenzoate + H2O. Its pathway is quinol/quinone metabolism; 1,4-dihydroxy-2-naphthoate biosynthesis; 1,4-dihydroxy-2-naphthoate from chorismate: step 4/7. It participates in quinol/quinone metabolism; menaquinone biosynthesis. Converts 2-succinyl-6-hydroxy-2,4-cyclohexadiene-1-carboxylate (SHCHC) to 2-succinylbenzoate (OSB). The sequence is that of o-succinylbenzoate synthase from Escherichia coli O9:H4 (strain HS).